A 350-amino-acid polypeptide reads, in one-letter code: 3-isopropylmalate dehydrogenase (350 aa).

76 to 87 (GPKWDNAPKRPE) is an NAD(+) binding site. Substrate-binding residues include arginine 94, arginine 104, arginine 132, and aspartate 217. Residues aspartate 217, aspartate 241, and aspartate 245 each contribute to the Mg(2+) site. 275 to 287 (GSAPDIANQNIAN) serves as a coordination point for NAD(+).

The protein belongs to the isocitrate and isopropylmalate dehydrogenases family. LeuB type 1 subfamily. As to quaternary structure, homodimer. Mg(2+) is required as a cofactor. Requires Mn(2+) as cofactor.

The protein resides in the cytoplasm. The catalysed reaction is (2R,3S)-3-isopropylmalate + NAD(+) = 4-methyl-2-oxopentanoate + CO2 + NADH. Its pathway is amino-acid biosynthesis; L-leucine biosynthesis; L-leucine from 3-methyl-2-oxobutanoate: step 3/4. Functionally, catalyzes the oxidation of 3-carboxy-2-hydroxy-4-methylpentanoate (3-isopropylmalate) to 3-carboxy-4-methyl-2-oxopentanoate. The product decarboxylates to 4-methyl-2 oxopentanoate. This chain is 3-isopropylmalate dehydrogenase, found in Listeria monocytogenes serotype 4b (strain F2365).